Here is a 163-residue protein sequence, read N- to C-terminus: NADH-quinone oxidoreductase subunit I 1 (163 aa).

4Fe-4S ferredoxin-type domains follow at residues 53–83 and 94–123; these read LRRY…IEAG and VRYD…EGPN. 8 residues coordinate [4Fe-4S] cluster: cysteine 63, cysteine 66, cysteine 69, cysteine 73, cysteine 103, cysteine 106, cysteine 109, and cysteine 113.

Belongs to the complex I 23 kDa subunit family. NDH-1 is composed of 14 different subunits. Subunits NuoA, H, J, K, L, M, N constitute the membrane sector of the complex. It depends on [4Fe-4S] cluster as a cofactor.

It is found in the cell inner membrane. It carries out the reaction a quinone + NADH + 5 H(+)(in) = a quinol + NAD(+) + 4 H(+)(out). In terms of biological role, NDH-1 shuttles electrons from NADH, via FMN and iron-sulfur (Fe-S) centers, to quinones in the respiratory chain. The immediate electron acceptor for the enzyme in this species is believed to be ubiquinone. Couples the redox reaction to proton translocation (for every two electrons transferred, four hydrogen ions are translocated across the cytoplasmic membrane), and thus conserves the redox energy in a proton gradient. The polypeptide is NADH-quinone oxidoreductase subunit I 1 (Rhizobium etli (strain ATCC 51251 / DSM 11541 / JCM 21823 / NBRC 15573 / CFN 42)).